Reading from the N-terminus, the 2344-residue chain is Pecanex-like protein 1 (2344 aa).

2 consecutive transmembrane segments (helical) span residues 33 to 53 (ALHL…YMAL) and 57 to 77 (MIIV…LKMV). 4 disordered regions span residues 101–163 (QRAK…GSSR), 271–290 (SHSY…SSSA), 306–692 (QQQR…TRAR), and 749–837 (VTRS…VQSR). Over residues 143 to 163 (SSRNSYAGLDPSNQIGSGSSR) the composition is skewed to polar residues. Positions 272–282 (HSYRKEHRPRG) are enriched in basic residues. The segment covering 328–343 (RESSAGKSCPPAQSQP) has biased composition (polar residues). Residues 372 to 390 (SLRSLSTRSSGSTESYCSG) are compositionally biased toward low complexity. The segment covering 396–406 (NSTLSSYKSEQ) has biased composition (polar residues). Composition is skewed to basic and acidic residues over residues 416-458 (LSEH…DKTA), 508-522 (RPPE…EQSE), and 531-547 (RVCK…DVRP). Basic residues predominate over residues 557–572 (TSAHKPGRRRTGKKRA). A compositionally biased stretch (low complexity) spans 616–638 (SIHSAHQFSSDSSSSATSHSCQS). Residues 749–758 (VTRSRNSLPS) are compositionally biased toward polar residues. 2 stretches are compositionally biased toward low complexity: residues 770–781 (AATGAAQASEEA) and 817–835 (LSLQ…VKVQ). 3 helical membrane-spanning segments follow: residues 1010 to 1030 (ILAV…LIQG), 1035 to 1055 (IWVF…LKSV), and 1069 to 1089 (IIAY…WLLD). N-linked (GlcNAc...) asparagine glycosylation is present at Asn1094. A helical membrane pass occupies residues 1119 to 1139 (LVIVFTLCFPIVFFIGLLPQV). Asn1158 is a glycosylation site (N-linked (GlcNAc...) asparagine). Transmembrane regions (helical) follow at residues 1163–1183 (LLAA…LYGL), 1196–1216 (HVPV…YHLS), 1269–1289 (LVVC…TVFT), and 1297–1317 (YVLY…LPQV). N-linked (GlcNAc...) asparagine glycans are attached at residues Asn1582, Asn1723, Asn1985, and Asn2075. The disordered stretch occupies residues 2051–2123 (EDSDTGGGTS…SSLVRQSPAR (73 aa)). Polar residues-rich tracts occupy residues 2061 to 2081 (CPGN…QGST) and 2095 to 2118 (PTTS…SLVR). Residues Asn2231, Asn2237, and Asn2263 are each glycosylated (N-linked (GlcNAc...) asparagine).

The protein belongs to the pecanex family.

The protein localises to the membrane. This chain is Pecanex-like protein 1, found in Mus musculus (Mouse).